The primary structure comprises 586 residues: Potassium-transporting ATPase potassium-binding subunit (586 aa).

12 consecutive transmembrane segments (helical) span residues 11 to 31 (LFLV…AKVF), 67 to 87 (AVAV…ILML), 136 to 156 (GLAV…IAVI), 179 to 199 (LYVL…QGVI), 279 to 299 (VEIF…GVMV), 306 to 326 (WAIL…LQGV), 351 to 371 (FGLA…CGAV), 381 to 401 (LGGM…GGVG), 403 to 423 (GLYT…LMIG), 442 to 462 (IITV…AMIT), 507 to 527 (ILGS…VLAM), and 551 to 571 (FALW…FPAL).

It belongs to the KdpA family. As to quaternary structure, the system is composed of three essential subunits: KdpA, KdpB and KdpC.

The protein resides in the cell inner membrane. Functionally, part of the high-affinity ATP-driven potassium transport (or Kdp) system, which catalyzes the hydrolysis of ATP coupled with the electrogenic transport of potassium into the cytoplasm. This subunit binds the periplasmic potassium ions and delivers the ions to the membrane domain of KdpB through an intramembrane tunnel. In Geobacter metallireducens (strain ATCC 53774 / DSM 7210 / GS-15), this protein is Potassium-transporting ATPase potassium-binding subunit.